A 184-amino-acid chain; its full sequence is Probable RNA 2'-phosphotransferase (184 aa).

It belongs to the KptA/TPT1 family.

Its function is as follows. Removes the 2'-phosphate from RNA via an intermediate in which the phosphate is ADP-ribosylated by NAD followed by a presumed transesterification to release the RNA and generate ADP-ribose 1''-2''-cyclic phosphate (APPR&gt;P). May function as an ADP-ribosylase. The sequence is that of Probable RNA 2'-phosphotransferase from Rhizobium leguminosarum bv. trifolii (strain WSM2304).